The chain runs to 380 residues: Crotonobetainyl-CoA reductase (380 aa).

This sequence belongs to the acyl-CoA dehydrogenase family. In terms of assembly, homotetramer. It depends on FAD as a cofactor.

The protein resides in the cytoplasm. The catalysed reaction is 4-(trimethylamino)butanoyl-CoA + oxidized [electron-transfer flavoprotein] + H(+) = crotonobetainyl-CoA + reduced [electron-transfer flavoprotein]. The protein operates within amine and polyamine metabolism; carnitine metabolism. Catalyzes the reduction of crotonobetainyl-CoA to gamma-butyrobetainyl-CoA. This is Crotonobetainyl-CoA reductase from Salmonella typhi.